Here is a 932-residue protein sequence, read N- to C-terminus: Beta-mannosidase A (932 aa).

An N-terminal signal peptide occupies residues 1 to 19 (MRVPAQATIAVLASAVSSP). N-linked (GlcNAc...) asparagine glycosylation is found at asparagine 41, asparagine 81, asparagine 94, asparagine 249, asparagine 261, asparagine 284, asparagine 289, asparagine 318, and asparagine 348. The active-site Proton donor is the glutamate 480. 8 N-linked (GlcNAc...) asparagine glycosylation sites follow: asparagine 538, asparagine 551, asparagine 609, asparagine 624, asparagine 632, asparagine 659, asparagine 739, and asparagine 791.

The protein belongs to the glycosyl hydrolase 2 family. Beta-mannosidase A subfamily. In terms of assembly, homodimer.

The protein resides in the secreted. The enzyme catalyses Hydrolysis of terminal, non-reducing beta-D-mannose residues in beta-D-mannosides.. Its pathway is glycan metabolism; N-glycan degradation. Its function is as follows. Exoglycosidase that cleaves the single beta-linked mannose residue from the non-reducing end of beta-mannosidic oligosaccharides of various complexity and length. Involved in the degradation of polymeric mannan and galactomannan. The chain is Beta-mannosidase A (mndA) from Aspergillus terreus (strain NIH 2624 / FGSC A1156).